A 156-amino-acid polypeptide reads, in one-letter code: Small ribosomal subunit protein uS7 (156 aa).

This sequence belongs to the universal ribosomal protein uS7 family. In terms of assembly, part of the 30S ribosomal subunit. Contacts proteins S9 and S11.

Functionally, one of the primary rRNA binding proteins, it binds directly to 16S rRNA where it nucleates assembly of the head domain of the 30S subunit. Is located at the subunit interface close to the decoding center, probably blocks exit of the E-site tRNA. The protein is Small ribosomal subunit protein uS7 of Alkaliphilus oremlandii (strain OhILAs) (Clostridium oremlandii (strain OhILAs)).